We begin with the raw amino-acid sequence, 339 residues long: tRNA dimethylallyltransferase (339 aa).

33–40 (GPTASGKT) provides a ligand contact to ATP. Substrate is bound at residue 35-40 (TASGKT). 2 interaction with substrate tRNA regions span residues 58–61 (DSLL) and 182–186 (QRIQR).

It belongs to the IPP transferase family. In terms of assembly, monomer. Mg(2+) serves as cofactor.

It catalyses the reaction adenosine(37) in tRNA + dimethylallyl diphosphate = N(6)-dimethylallyladenosine(37) in tRNA + diphosphate. Catalyzes the transfer of a dimethylallyl group onto the adenine at position 37 in tRNAs that read codons beginning with uridine, leading to the formation of N6-(dimethylallyl)adenosine (i(6)A). The sequence is that of tRNA dimethylallyltransferase from Acidithiobacillus ferrooxidans (strain ATCC 23270 / DSM 14882 / CIP 104768 / NCIMB 8455) (Ferrobacillus ferrooxidans (strain ATCC 23270)).